A 347-amino-acid chain; its full sequence is CDK2-associated and cullin domain-containing protein 1 (347 aa).

Acidic residues predominate over residues 1-11 (MEESMEEEEML). Disordered regions lie at residues 1–63 (MEES…LPGG) and 320–347 (RGDQSRKRAGDELAYNSPSACASSRGYR). A compositionally biased stretch (pro residues) spans 34 to 49 (QPPPAPPLPPPPPPRP).

Belongs to the cullin family. As to quaternary structure, interacts with CDK2.

Functionally, cell cycle associated protein capable of promoting cell proliferation through the activation of CDK2 at the G1/S phase transition. The chain is CDK2-associated and cullin domain-containing protein 1 (Cacul1) from Rattus norvegicus (Rat).